Consider the following 219-residue polypeptide: Claudin-6 (219 aa).

The Cytoplasmic portion of the chain corresponds to 1–7; that stretch reads MASTGLQ. The helical transmembrane segment at 8-28 threads the bilayer; that stretch reads ILGIVLTLLGWVNALVSCALP. Residues 29 to 81 are Extracellular-facing; the sequence is MWKVTAFIGNSIVVAQMVWEGLWMSCVVQSTGQMQCKVYDSLLALPQDLQAAR. Residues 82 to 102 form a helical membrane-spanning segment; that stretch reads ALCVVTLLIVLLGLLVYLAGA. Topologically, residues 103–116 are cytoplasmic; sequence KCTTCVEDRNSKSR. A helical membrane pass occupies residues 117-137; that stretch reads LVLISGIIFVISGVLTLIPVC. The Extracellular segment spans residues 138 to 163; sequence WTAHSIIQDFYNPLVADAQKRELGAS. The helical transmembrane segment at 164-184 threads the bilayer; sequence LYLGWAASGLLLLGGGLLCCA. Topologically, residues 185–219 are cytoplasmic; that stretch reads CSSGGTQGPRHYMACYSTSVPHSRGPSEYPTKNYV. 4 positions are modified to phosphoserine: S201, S203, S207, and S211. The segment at 218–219 is interactions with TJP1, TJP2 and TJP3; that stretch reads YV.

It belongs to the claudin family. In terms of assembly, directly interacts with TJP1/ZO-1, TJP2/ZO-2 and TJP3/ZO-3. Interacts with CLDN1, CD81 and OCLN. In terms of tissue distribution, expressed mostly in embryonic tissues.

The protein localises to the cell junction. Its subcellular location is the tight junction. The protein resides in the cell membrane. In terms of biological role, plays a major role in tight junction-specific obliteration of the intercellular space, through calcium-independent cell-adhesion activity. The sequence is that of Claudin-6 (Cldn6) from Mus musculus (Mouse).